The sequence spans 466 residues: Vimentin (466 aa).

Composition is skewed to low complexity over residues 1 to 13 and 20 to 31; these read MSTR…SYRR and TASRPSSSRSYV. The segment at 1-31 is disordered; that stretch reads MSTRTVSSSSYRRMFGGPGTASRPSSSRSYV. Ser-2 carries the N-acetylserine modification. The tract at residues 2-95 is head; it reads STRTVSSSSY…FSLADAINTE (94 aa). Ser-7 bears the Phosphoserine; alternate mark. Ser-7 is a glycosylation site (O-linked (GlcNAc) serine; alternate). Phosphoserine occurs at positions 8, 9, and 10. At Thr-20 the chain carries Phosphothreonine. 2 positions are modified to phosphoserine: Ser-25 and Ser-26. O-linked (GlcNAc) threonine glycosylation is present at Thr-33. The O-linked (GlcNAc) serine; alternate glycan is linked to Ser-34. Phosphoserine; by PKC; alternate is present on Ser-34. At Ser-39 the chain carries Phosphoserine; by CaMK2, PKA, PKC and ROCK2. A phosphoserine mark is found at Ser-42, Ser-47, Ser-49, and Ser-51. Tyr-53 carries the post-translational modification Phosphotyrosine. Ser-55 is subject to Phosphoserine. Ser-56 is modified (phosphoserine; by CDK5 and CDK1). A Phosphotyrosine modification is found at Tyr-61. Ser-66 is subject to Phosphoserine. Ser-72 is modified (phosphoserine; by AURKB and ROCK2). Residues Ser-73 and Ser-87 each carry the phosphoserine modification. Residues 96–131 form a coil 1A region; it reads FKNTRTNEKVELQELNDRFANYIDKVRFLEQQNKIL. A coiled-coil region spans residues 96-131; the sequence is FKNTRTNEKVELQELNDRFANYIDKVRFLEQQNKIL. Positions 103 to 411 constitute an IF rod domain; it reads EKVELQELND…KLLEGEESRI (309 aa). Lys-104 participates in a covalent cross-link: Glycyl lysine isopeptide (Lys-Gly) (interchain with G-Cter in SUMO2). Phosphotyrosine is present on Tyr-117. Residues Lys-120, Lys-129, and Lys-139 each carry the N6-acetyllysine; alternate modification. N6-succinyllysine; alternate occurs at positions 120 and 129. Residues Lys-120, Lys-129, and Lys-139 each participate in a glycyl lysine isopeptide (Lys-Gly) (interchain with G-Cter in SUMO2); alternate cross-link. The segment at 132 to 153 is linker 1; it reads LAELEQLKGQGKSRLGDLYEEE. Ser-144 is subject to Phosphoserine. Positions 154–245 form a coiled coil; that stretch reads MRELRRQVDQ…KLHDEEIQEL (92 aa). The interval 154–245 is coil 1B; that stretch reads MRELRRQVDQ…KLHDEEIQEL (92 aa). Residue Lys-168 is modified to N6-acetyllysine. Lys-188 carries the N6-acetyllysine; alternate modification. Lys-188 bears the N6-succinyllysine; alternate mark. Ser-214 is subject to Phosphoserine. Lys-223 carries the N6-acetyllysine; alternate modification. A Glycyl lysine isopeptide (Lys-Gly) (interchain with G-Cter in SUMO2); alternate cross-link involves residue Lys-223. Residue Ser-226 is modified to Phosphoserine. The residue at position 235 (Lys-235) is an N6-acetyllysine. The interval 246-268 is linker 12; it reads QAQIQEQHVQIDMDVSKPDLTAA. A Glycyl lysine isopeptide (Lys-Gly) (interchain with G-Cter in SUMO2) cross-link involves residue Lys-262. The tract at residues 269–407 is coil 2; it reads LRDVRQQYES…ATYRKLLEGE (139 aa). At Lys-294 the chain carries N6-acetyllysine; alternate. An N6-succinyllysine; alternate modification is found at Lys-294. Lys-294 is covalently cross-linked (Glycyl lysine isopeptide (Lys-Gly) (interchain with G-Cter in SUMO2); alternate). Position 299 is a phosphoserine (Ser-299). Positions 303 to 407 form a coiled coil; the sequence is NRNNDALRQA…ATYRKLLEGE (105 aa). Residue Lys-313 forms a Glycyl lysine isopeptide (Lys-Gly) (interchain with G-Cter in SUMO2) linkage. Residue Ser-325 is modified to Phosphoserine. The [IL]-x-C-x-x-[DE] motif motif lies at 326-329; that stretch reads LTCE. Residue Lys-373 is modified to N6-acetyllysine; alternate. Lys-373 is covalently cross-linked (Glycyl lysine isopeptide (Lys-Gly) (interchain with G-Cter in SUMO2); alternate). The tract at residues 408–466 is tail; it reads ESRISLPLPNFSSLNLRETNLESLPLVDTHSKRTLLIKTVETRDGQVINETSQHHDDLE. Residues Ser-409, Ser-412, Ser-419, and Ser-420 each carry the phosphoserine modification. Thr-426 carries the post-translational modification Phosphothreonine. Ser-430 carries the phosphoserine modification. Residue Thr-436 is modified to Phosphothreonine. Position 438 is a phosphoserine (Ser-438). Lys-439 participates in a covalent cross-link: Glycyl lysine isopeptide (Lys-Gly) (interchain with G-Cter in SUMO2). Position 445 is an N6-acetyllysine; alternate (Lys-445). The residue at position 445 (Lys-445) is an N6-succinyllysine; alternate. Lys-445 is covalently cross-linked (Glycyl lysine isopeptide (Lys-Gly) (interchain with G-Cter in SUMO2); alternate). Residue Lys-445 forms a Glycyl lysine isopeptide (Lys-Gly) (interchain with G-Cter in SUMO1); alternate linkage. A phosphothreonine mark is found at Thr-446 and Thr-458. Ser-459 is modified (phosphoserine).

Belongs to the intermediate filament family. As to quaternary structure, homomer assembled from elementary dimers. Identified in complexes that contain VIM, EZR, AHNAK, BFSP1, BFSP2, ANK2, PLEC, PRX and spectrin. Interacts with BCAS3. Interacts with LGSN. Interacts with SYNM. Interacts (via rod region) with PLEC (via CH 1 domain). Interacts with STK33. Interacts with LARP6. Interacts with RAB8B. Interacts with TOR1A; the interaction associates TOR1A with the cytoskeleton. Interacts with TOR1AIP1. Interacts with TOR1AIP1. Interacts with DIAPH1. Interacts with EPPK1; interaction is dependent of higher-order structure of intermediate filament. Interacts with the non-receptor tyrosine kinase SRMS; the interaction leads to phosphorylation of VIM. Interacts with NOD2. Interacts (via head region) with CORO1C. Interacts with HDGF. Interacts with PRKCE (via phorbol-ester/DAG-type 2 domain). Interacts with BFSP2. Interacts with PPL. Interacts with PKP1 and PKP2. Interacts with SCRIB (via PDZ domains); the interaction protects SCRIB from proteasomal degradation and facilitates SCRIB localization to intermediate filaments, the interaction is reduced by cell contact inhibition. Post-translationally, one of the most prominent phosphoproteins in various cells of mesenchymal origin. Phosphorylation is enhanced during cell division, at which time vimentin filaments are significantly reorganized. Phosphorylation by PKN1 inhibits the formation of filaments. Filament disassembly during mitosis is promoted by phosphorylation at Ser-55 as well as by nestin. Phosphorylated at Ser-56 by CDK5 during neutrophil secretion in the cytoplasm. Phosphorylated by STK33. Phosphorylated on tyrosine residues by SRMS. S-nitrosylation is induced by interferon-gamma and oxidatively-modified low-densitity lipoprotein (LDL(ox)) possibly implicating the iNOS-S100A8/9 transnitrosylase complex.

It localises to the cytoplasm. The protein resides in the cytoskeleton. The protein localises to the nucleus matrix. It is found in the cell membrane. Vimentins are class-III intermediate filaments found in various non-epithelial cells, especially mesenchymal cells. Vimentin is attached to the nucleus, endoplasmic reticulum, and mitochondria, either laterally or terminally. Plays a role in cell directional movement, orientation, cell sheet organization and Golgi complex polarization at the cell migration front. Protects SCRIB from proteasomal degradation and facilitates its localization to intermediate filaments in a cell contact-mediated manner. In terms of biological role, involved with LARP6 in the stabilization of type I collagen mRNAs for CO1A1 and CO1A2. The protein is Vimentin (VIM) of Sus scrofa (Pig).